An 83-amino-acid chain; its full sequence is Mitochondrial import inner membrane translocase subunit Tim8 B (83 aa).

N-acetylalanine is present on Ala2. The Twin CX3C motif signature appears at 36-59; that stretch reads CWDKCVEKPGSRLDSRTENCLSSC. 2 cysteine pairs are disulfide-bonded: Cys36–Cys59 and Cys40–Cys55.

This sequence belongs to the small Tim family. As to quaternary structure, heterohexamer; possibly composed of 3 copies of TIMM8B and 3 copies of TIMM13, named soluble 70 kDa complex. Associates with the TIM22 complex, whose core is composed of TIMM22.

The protein localises to the mitochondrion inner membrane. In terms of biological role, probable mitochondrial intermembrane chaperone that participates in the import and insertion of some multi-pass transmembrane proteins into the mitochondrial inner membrane. Also required for the transfer of beta-barrel precursors from the TOM complex to the sorting and assembly machinery (SAM complex) of the outer membrane. Acts as a chaperone-like protein that protects the hydrophobic precursors from aggregation and guide them through the mitochondrial intermembrane space. The protein is Mitochondrial import inner membrane translocase subunit Tim8 B (Timm8b) of Mus musculus (Mouse).